A 775-amino-acid chain; its full sequence is 1,4-alpha-glucan branching enzyme GlgB (775 aa).

Residues 1–39 (MTSVHDFATATRPATPSAAAQEPAPALPPGLDRNTLDAL) form a disordered region. Residues 8–24 (ATATRPATPSAAAQEPA) are compositionally biased toward low complexity. The Nucleophile role is filled by aspartate 454. Glutamate 507 serves as the catalytic Proton donor.

It belongs to the glycosyl hydrolase 13 family. GlgB subfamily. In terms of assembly, monomer.

The catalysed reaction is Transfers a segment of a (1-&gt;4)-alpha-D-glucan chain to a primary hydroxy group in a similar glucan chain.. It functions in the pathway glycan biosynthesis; glycogen biosynthesis. Catalyzes the formation of the alpha-1,6-glucosidic linkages in glycogen by scission of a 1,4-alpha-linked oligosaccharide from growing alpha-1,4-glucan chains and the subsequent attachment of the oligosaccharide to the alpha-1,6 position. This is 1,4-alpha-glucan branching enzyme GlgB from Ralstonia nicotianae (strain ATCC BAA-1114 / GMI1000) (Ralstonia solanacearum).